Here is a 533-residue protein sequence, read N- to C-terminus: Beta-glucosidase 24 (533 aa).

The first 26 residues, 1 to 26 (MVLQKLPLMSIGLLWLLIIVGPLVNA), serve as a signal peptide directing secretion. Glutamine 58 lines the a beta-D-glucoside pocket. Asparagine 64 and asparagine 88 each carry an N-linked (GlcNAc...) asparagine glycan. A beta-D-glucoside-binding positions include histidine 161 and 206-207 (NE). Glutamate 207 serves as the catalytic Proton donor. Cysteines 226 and 239 form a disulfide. Tyrosine 355 provides a ligand contact to a beta-D-glucoside. N-linked (GlcNAc...) asparagine glycosylation occurs at asparagine 388. Residue glutamate 427 participates in a beta-D-glucoside binding. Residue glutamate 427 is the Nucleophile of the active site. Residues asparagine 437, asparagine 442, and asparagine 470 are each glycosylated (N-linked (GlcNAc...) asparagine). Residues tryptophan 477, 484–485 (EW), and phenylalanine 493 each bind a beta-D-glucoside. Residue asparagine 503 is glycosylated (N-linked (GlcNAc...) asparagine). The short motif at 530–533 (KDEL) is the Prevents secretion from ER element.

Belongs to the glycosyl hydrolase 1 family.

It localises to the endoplasmic reticulum lumen. It catalyses the reaction Hydrolysis of terminal, non-reducing beta-D-glucosyl residues with release of beta-D-glucose.. This is Beta-glucosidase 24 from Arabidopsis thaliana (Mouse-ear cress).